The chain runs to 312 residues: Malate dehydrogenase (312 aa).

NAD(+) is bound by residues 7–13 and Asp-34; that span reads GAAGGIG. The substrate site is built by Arg-81 and Arg-87. Residues Asn-94 and 117 to 119 each bind NAD(+); that span reads ITN. Substrate is bound by residues Asn-119 and Arg-153. The Proton acceptor role is filled by His-177. Residue Met-227 participates in NAD(+) binding.

The protein belongs to the LDH/MDH superfamily. MDH type 1 family. As to quaternary structure, homodimer.

It catalyses the reaction (S)-malate + NAD(+) = oxaloacetate + NADH + H(+). Catalyzes the reversible oxidation of malate to oxaloacetate. The sequence is that of Malate dehydrogenase from Cronobacter sakazakii (strain ATCC BAA-894) (Enterobacter sakazakii).